The primary structure comprises 271 residues: Sec-independent protein translocase protein TatC (271 aa).

6 helical membrane-spanning segments follow: residues 35 to 55 (IIWT…WHEQ), 93 to 113 (AFIA…WLFI), 124 to 144 (YVLP…VFGY), 178 to 198 (IILG…LALM), 213 to 233 (SILV…IMNM), and 234 to 254 (CVFA…AFLV).

The protein belongs to the TatC family. Forms a complex with TatA.

It is found in the cell inner membrane. Functionally, part of the twin-arginine translocation (Tat) system that transports large folded proteins containing a characteristic twin-arginine motif in their signal peptide across membranes. This is Sec-independent protein translocase protein TatC from Koribacter versatilis (strain Ellin345).